The primary structure comprises 233 residues: Zinc import ATP-binding protein ZnuC (233 aa).

The 217-residue stretch at 6–222 (IEFHNVSKKF…SDFSNALSSL (217 aa)) folds into the ABC transporter domain. Residue 38–45 (GPNGAGKT) participates in ATP binding.

It belongs to the ABC transporter superfamily. Zinc importer (TC 3.A.1.15.5) family. In terms of assembly, the complex is composed of two ATP-binding proteins (ZnuC), two transmembrane proteins (ZnuB) and a solute-binding protein (ZnuA).

The protein localises to the cell inner membrane. The catalysed reaction is Zn(2+)(out) + ATP(in) + H2O(in) = Zn(2+)(in) + ADP(in) + phosphate(in) + H(+)(in). Part of the ABC transporter complex ZnuABC involved in zinc import. Responsible for energy coupling to the transport system. The chain is Zinc import ATP-binding protein ZnuC from Rickettsia bellii (strain RML369-C).